The chain runs to 291 residues: Formamidopyrimidine-DNA glycosylase (291 aa).

The active-site Schiff-base intermediate with DNA is P2. The Proton donor role is filled by E3. K58 acts as the Proton donor; for beta-elimination activity in catalysis. H100, R123, and K166 together coordinate DNA. The FPG-type zinc-finger motif lies at 257–291 (SVYGREGKECSRCGMHIVRIVQSGRSSFYCPQCQK). R281 (proton donor; for delta-elimination activity) is an active-site residue.

This sequence belongs to the FPG family. As to quaternary structure, monomer. Zn(2+) serves as cofactor.

The catalysed reaction is Hydrolysis of DNA containing ring-opened 7-methylguanine residues, releasing 2,6-diamino-4-hydroxy-5-(N-methyl)formamidopyrimidine.. The enzyme catalyses 2'-deoxyribonucleotide-(2'-deoxyribose 5'-phosphate)-2'-deoxyribonucleotide-DNA = a 3'-end 2'-deoxyribonucleotide-(2,3-dehydro-2,3-deoxyribose 5'-phosphate)-DNA + a 5'-end 5'-phospho-2'-deoxyribonucleoside-DNA + H(+). Functionally, involved in base excision repair of DNA damaged by oxidation or by mutagenic agents. Acts as a DNA glycosylase that recognizes and removes damaged bases. Has a preference for oxidized purines, such as 7,8-dihydro-8-oxoguanine (8-oxoG). Has AP (apurinic/apyrimidinic) lyase activity and introduces nicks in the DNA strand. Cleaves the DNA backbone by beta-delta elimination to generate a single-strand break at the site of the removed base with both 3'- and 5'-phosphates. This Bartonella bacilliformis (strain ATCC 35685 / KC583 / Herrer 020/F12,63) protein is Formamidopyrimidine-DNA glycosylase.